Here is a 299-residue protein sequence, read N- to C-terminus: Myozenin-1 (299 aa).

Residues 1–34 are disordered; sequence MPLSGTPAPNKKRKSSKLIMELTGGGQESSGLNL. A Phosphoserine modification is found at serine 82. The segment at 102 to 174 is disordered; the sequence is GQGFSYSKSN…TGSGDQAGGE (73 aa). 2 stretches are compositionally biased toward gly residues: residues 112 to 125 and 137 to 173; these read GRGGSQAGGSGSAG and SGSGAGGTGGPAGQAGRGGAAGTAGVGETGSGDQAGG.

The protein belongs to the myozenin family. Interacts with ACTN2, ACTN3, FLNA, FLNB, FLNC, LDB3, PPP3CA and TCAP. Interacts via its C-terminal region with MYOT. Expressed primarily in skeletal muscle. Detected at lower levels in heart, prostate and pancreas.

The protein localises to the nucleus. The protein resides in the cell projection. It localises to the pseudopodium. Myozenins may serve as intracellular binding proteins involved in linking Z-disk proteins such as alpha-actinin, gamma-filamin, TCAP/telethonin, LDB3/ZASP and localizing calcineurin signaling to the sarcomere. Plays an important role in the modulation of calcineurin signaling. May play a role in myofibrillogenesis. In Homo sapiens (Human), this protein is Myozenin-1.